We begin with the raw amino-acid sequence, 347 residues long: Epimerase family protein SDR39U1 homolog, chloroplastic (347 aa).

The N-terminal 37 residues, 1–37 (MELLCSPTSLSSSFALSSALLVPRSFSMPGTRRFMVL), are a transit peptide targeting the chloroplast. Residues 54–57 (TGFI), 76–77 (TR), 115–119 (LAGLP), and Arg-136 each bind NADP(+).

In terms of assembly, can form homodimers. Expressed in leaves, stems and flower buds.

It is found in the plastid. The protein resides in the chloroplast inner membrane. Its subcellular location is the chloroplast. Putative NADP-dependent oxidoreductase that acts as a positive regulator of chloroplast division. May play a role at an early stage of the division process. This chain is Epimerase family protein SDR39U1 homolog, chloroplastic, found in Arabidopsis thaliana (Mouse-ear cress).